Consider the following 105-residue polypeptide: ATP-dependent Clp protease adapter protein ClpS (105 aa).

The tract at residues M1–V27 is disordered.

It belongs to the ClpS family. Binds to the N-terminal domain of the chaperone ClpA.

Involved in the modulation of the specificity of the ClpAP-mediated ATP-dependent protein degradation. This chain is ATP-dependent Clp protease adapter protein ClpS, found in Mycolicibacterium paratuberculosis (strain ATCC BAA-968 / K-10) (Mycobacterium paratuberculosis).